Reading from the N-terminus, the 473-residue chain is Glutamyl-tRNA reductase (473 aa).

Residues 49-52 (TCNR), Ser109, 114-116 (EHQ), and Gln120 each bind substrate. The active-site Nucleophile is the Cys50. 189 to 194 (GAGAMA) serves as a coordination point for NADP(+). Residues 422-473 (VAISAPQPSTDSPARAAYQPTDEAATDAEPRRDDAEPPSAAAAQDAGRESRP) are disordered.

This sequence belongs to the glutamyl-tRNA reductase family. Homodimer.

The catalysed reaction is (S)-4-amino-5-oxopentanoate + tRNA(Glu) + NADP(+) = L-glutamyl-tRNA(Glu) + NADPH + H(+). It functions in the pathway porphyrin-containing compound metabolism; protoporphyrin-IX biosynthesis; 5-aminolevulinate from L-glutamyl-tRNA(Glu): step 1/2. Its function is as follows. Catalyzes the NADPH-dependent reduction of glutamyl-tRNA(Glu) to glutamate 1-semialdehyde (GSA). The sequence is that of Glutamyl-tRNA reductase from Acidothermus cellulolyticus (strain ATCC 43068 / DSM 8971 / 11B).